The following is a 342-amino-acid chain: Cilia- and flagella-associated protein 36 (342 aa).

2 positions are modified to phosphoserine: Ser-85 and Ser-147. A coiled-coil region spans residues 150–187; the sequence is EHEEMKILREVLRKSKEEYDQEEERKRKKQLSEAKTEE. The disordered stretch occupies residues 166–194; it reads EEYDQEEERKRKKQLSEAKTEEPTVHSSE. Positions 179-189 are enriched in basic and acidic residues; the sequence is QLSEAKTEEPT. Ser-201 is modified (phosphoserine). Disordered stretches follow at residues 229–250 and 282–322; these read RKVE…PGLE and KLMS…AEEK. 2 stretches are compositionally biased toward basic and acidic residues: residues 282–292 and 300–322; these read KLMSMRKDMRT and QKGK…AEEK.

This sequence belongs to the CFAP36 family. Interacts with ARL3. Expressed in several human tissues including brain, testis, heart, lung, pancreas and spleen (at protein level).

The protein resides in the nucleus. It is found in the cytoplasm. It localises to the cell projection. The protein localises to the cilium. Its subcellular location is the flagellum. May act as an effector for ARL3. The sequence is that of Cilia- and flagella-associated protein 36 (CFAP36) from Homo sapiens (Human).